Here is a 192-residue protein sequence, read N- to C-terminus: Large ribosomal subunit protein uL6 (192 aa).

This sequence belongs to the universal ribosomal protein uL6 family. As to quaternary structure, part of the 50S ribosomal subunit.

This protein binds to the 23S rRNA, and is important in its secondary structure. It is located near the subunit interface in the base of the L7/L12 stalk, and near the tRNA binding site of the peptidyltransferase center. This is Large ribosomal subunit protein uL6 from Nanoarchaeum equitans (strain Kin4-M).